A 638-amino-acid chain; its full sequence is 1-deoxy-D-xylulose-5-phosphate synthase (638 aa).

Thiamine diphosphate-binding positions include His74 and 115–117 (GHS). Asp146 is a binding site for Mg(2+). Residues 147-148 (GA), Asn175, Tyr286, and Glu366 each bind thiamine diphosphate. Residue Asn175 participates in Mg(2+) binding.

Belongs to the transketolase family. DXPS subfamily. In terms of assembly, homodimer. It depends on Mg(2+) as a cofactor. Thiamine diphosphate is required as a cofactor.

The catalysed reaction is D-glyceraldehyde 3-phosphate + pyruvate + H(+) = 1-deoxy-D-xylulose 5-phosphate + CO2. Its pathway is metabolic intermediate biosynthesis; 1-deoxy-D-xylulose 5-phosphate biosynthesis; 1-deoxy-D-xylulose 5-phosphate from D-glyceraldehyde 3-phosphate and pyruvate: step 1/1. Catalyzes the acyloin condensation reaction between C atoms 2 and 3 of pyruvate and glyceraldehyde 3-phosphate to yield 1-deoxy-D-xylulose-5-phosphate (DXP). In Syntrophomonas wolfei subsp. wolfei (strain DSM 2245B / Goettingen), this protein is 1-deoxy-D-xylulose-5-phosphate synthase.